Reading from the N-terminus, the 276-residue chain is Mitochondrial outer membrane protein porin of 34 kDa (276 aa).

This sequence belongs to the eukaryotic mitochondrial porin (TC 1.B.8.1) family.

Its subcellular location is the mitochondrion outer membrane. Its function is as follows. Forms a channel through the cell membrane that allows diffusion of small hydrophilic molecules. The channel adopts an open conformation at low or zero membrane potential and a closed conformation at potentials above 30-40 mV. The open state has a weak anion selectivity whereas the closed state is cation-selective. The chain is Mitochondrial outer membrane protein porin of 34 kDa from Solanum tuberosum (Potato).